Reading from the N-terminus, the 169-residue chain is Ribosome maturation factor RimM (169 aa).

A PRC barrel domain is found at 97-169 (EDEYYWTDLV…TITADWGLDY (73 aa)).

The protein belongs to the RimM family. In terms of assembly, binds ribosomal protein uS19.

The protein localises to the cytoplasm. Functionally, an accessory protein needed during the final step in the assembly of 30S ribosomal subunit, possibly for assembly of the head region. Essential for efficient processing of 16S rRNA. May be needed both before and after RbfA during the maturation of 16S rRNA. It has affinity for free ribosomal 30S subunits but not for 70S ribosomes. This is Ribosome maturation factor RimM from Neisseria meningitidis serogroup B (strain ATCC BAA-335 / MC58).